Consider the following 1026-residue polypeptide: uncharacterized protein (1026 aa).

WD repeat units lie at residues 14–53 (LLDEGLDVSSIHCFDQYLIVGQCSGQVMVFDVSTDNHFTL), 62–104 (HSVS…RRAT), 148–187 (GHEDWPILFPFKDEALLIPVAYSDGSVSLWSVDWSALTFK), and 937–977 (NAEC…VKFL).

Its subcellular location is the cytoplasm. It localises to the nucleus. This is an uncharacterized protein from Schizosaccharomyces pombe (strain 972 / ATCC 24843) (Fission yeast).